The chain runs to 700 residues: Elongation factor G (700 aa).

In terms of domain architecture, tr-type G spans 10–286; sequence TKVRNIGIMA…AVVDYLPSPL (277 aa). Residues 19–26, 83–87, and 137–140 each bind GTP; these read AHIDAGKT, DTPGH, and NKMD.

This sequence belongs to the TRAFAC class translation factor GTPase superfamily. Classic translation factor GTPase family. EF-G/EF-2 subfamily.

It localises to the cytoplasm. In terms of biological role, catalyzes the GTP-dependent ribosomal translocation step during translation elongation. During this step, the ribosome changes from the pre-translocational (PRE) to the post-translocational (POST) state as the newly formed A-site-bound peptidyl-tRNA and P-site-bound deacylated tRNA move to the P and E sites, respectively. Catalyzes the coordinated movement of the two tRNA molecules, the mRNA and conformational changes in the ribosome. This is Elongation factor G from Saccharopolyspora erythraea (strain ATCC 11635 / DSM 40517 / JCM 4748 / NBRC 13426 / NCIMB 8594 / NRRL 2338).